The chain runs to 105 residues: Met repressor (105 aa).

The protein belongs to the MetJ family. As to quaternary structure, homodimer.

It localises to the cytoplasm. This regulatory protein, when combined with SAM (S-adenosylmethionine) represses the expression of the methionine regulon and of enzymes involved in SAM synthesis. The chain is Met repressor from Shigella boydii serotype 18 (strain CDC 3083-94 / BS512).